A 621-amino-acid chain; its full sequence is DnaJ homolog subfamily C member 2 (621 aa).

Position 1 is an N-acetylmethionine (Met1). A phosphoserine mark is found at Ser47, Ser49, Ser60, and Ser63. Residues 88-161 (DHYAVLGLGH…VKRRAFNSVD (74 aa)) form the J domain. Positions 160-250 (VDPTFDNSVP…RDERRWIEKQ (91 aa)) are ZRF1-UBD. A Phosphoserine modification is found at Ser183. Disordered stretches follow at residues 294–315 (EKKA…QRQA) and 426–453 (KEEA…GSKH). 2 consecutive SANT domains span residues 449–511 (NGSK…KLDP) and 549–604 (TDFT…EMVK).

As to quaternary structure, component of ribosome-associated complex (RAC), a heterodimer composed of Hsp70/DnaK-type chaperone HSPA14 and Hsp40/DnaJ-type chaperone DNAJC2. Interacts (via ZRF1-UBD region) with ID1. Post-translationally, phosphorylated in M (mitotic) phase.

The protein localises to the nucleus. The protein resides in the cytoplasm. It is found in the cytosol. Functionally, acts both as a chaperone in the cytosol and as a chromatin regulator in the nucleus. When cytosolic, acts as a molecular chaperone: component of the ribosome-associated complex (RAC), a complex involved in folding or maintaining nascent polypeptides in a folding-competent state. In the RAC complex, stimulates the ATPase activity of the ribosome-associated pool of Hsp70-type chaperones HSPA14 that bind to the nascent polypeptide chain. When nuclear, mediates the switching from polycomb-repressed genes to an active state: specifically recruited at histone H2A ubiquitinated at 'Lys-119' (H2AK119ub), and promotes the displacement of the polycomb PRC1 complex from chromatin, thereby facilitating transcription activation. The protein is DnaJ homolog subfamily C member 2 (DNAJC2) of Bos taurus (Bovine).